The sequence spans 364 residues: Inner membrane ABC transporter permease protein YejB (364 aa).

The Periplasmic portion of the chain corresponds to 1–8 (MGAYLIRR). A helical transmembrane segment spans residues 9–29 (LLLVIPTLWAIITINFFIVQI). The Cytoplasmic segment spans residues 30–37 (APGGPVDQ). The chain crosses the membrane as a helical span at residues 38–58 (AIAAIEFGNAGVLPGAGGEGV). The Periplasmic segment spans residues 59 to 135 (RASHAQTGVG…LTLIKDSLPV (77 aa)). Residues 133-348 (LPVSITLGLW…LIGLLLNIVS (216 aa)) enclose the ABC transmembrane type-1 domain. Residues 136-156 (SITLGLWSTLIIYLVSIPLGI) traverse the membrane as a helical segment. Residues 157–172 (RKAVYNGSRFDVWSSA) are Cytoplasmic-facing. A helical membrane pass occupies residues 173–193 (FIIIGYAIPAFLFAILLIVFF). Over 194 to 224 (AGGSYFDLFPLRGLVSANFDSLPWYQKITDY) the chain is Periplasmic. A helical transmembrane segment spans residues 225 to 245 (LWHITLPVLATVIGGFAALTM). The Cytoplasmic segment spans residues 246 to 284 (LTKNSFLDEVRKQYVVTARAKGVSEKNILWKHVFRNAML). Residues 285-305 (LVIAGFPATFISMFFTGSLLI) traverse the membrane as a helical segment. Residues 306–326 (EVMFSLNGLGLLGYEATVSRD) are Periplasmic-facing. The helical transmembrane segment at 327-347 (YPVMFGTLYIFTLIGLLLNIV) threads the bilayer. The Cytoplasmic segment spans residues 348 to 364 (SDISYTLVDPRIDFEGR).

This sequence belongs to the binding-protein-dependent transport system permease family. OppBC subfamily.

It localises to the cell inner membrane. In terms of biological role, probably part of a binding-protein-dependent transport system. Probably responsible for the translocation of the substrate across the membrane. This is Inner membrane ABC transporter permease protein YejB (yejB) from Escherichia coli O157:H7.